The following is an 89-amino-acid chain: Small ribosomal subunit protein uS15 (89 aa).

This sequence belongs to the universal ribosomal protein uS15 family. In terms of assembly, part of the 30S ribosomal subunit. Forms a bridge to the 50S subunit in the 70S ribosome, contacting the 23S rRNA.

In terms of biological role, one of the primary rRNA binding proteins, it binds directly to 16S rRNA where it helps nucleate assembly of the platform of the 30S subunit by binding and bridging several RNA helices of the 16S rRNA. Its function is as follows. Forms an intersubunit bridge (bridge B4) with the 23S rRNA of the 50S subunit in the ribosome. In Ectopseudomonas mendocina (strain ymp) (Pseudomonas mendocina), this protein is Small ribosomal subunit protein uS15.